Reading from the N-terminus, the 114-residue chain is Hydrogenase maturation factor HypA (114 aa).

H2 contributes to the Ni(2+) binding site. Residues C73, C76, C89, and C92 each coordinate Zn(2+).

This sequence belongs to the HypA/HybF family.

In terms of biological role, involved in the maturation of [NiFe] hydrogenases. Required for nickel insertion into the metal center of the hydrogenase. This Desulfitobacterium hafniense (strain DSM 10664 / DCB-2) protein is Hydrogenase maturation factor HypA.